The primary structure comprises 1141 residues: Envelopment polyprotein (1141 aa).

An N-terminal signal peptide occupies residues Met1–Thr19. At Arg20–Thr489 the chain is on the lumenal side. Cystine bridges form between Cys29–Cys154, Cys63–Cys160, Cys112–Cys131, Cys136–Cys141, Cys178–Cys188, and Cys213–Cys252. Asn137 carries an N-linked (GlcNAc...) asparagine; by host glycan. N-linked (GlcNAc...) asparagine; by host glycosylation occurs at Asn352. 4 disulfide bridges follow: Cys381-Cys440, Cys385-Cys394, Cys410-Cys429, and Cys457-Cys480. Asn404 carries an N-linked (GlcNAc...) asparagine; by host glycan. A helical membrane pass occupies residues Ile490–Ile510. The Cytoplasmic portion of the chain corresponds to Ile511 to Cys632. The tract at residues Cys521–Lys538 is binding to the ribonucleoprotein. 2 CCHC-type zinc fingers span residues Cys550–Cys570 and Cys575–Cys596. 3 binding to the ribonucleoprotein regions span residues Phe593–Leu610, Lys597–Lys608, and Lys616–Ser630. Residues Thr612–Ala653 form an inhibition of interferon induction region. The region spanning Lys616 to Cys639 is the ITAM domain. Tyr620 and Tyr633 each carry phosphotyrosine. The short motif at Tyr620–Leu623 is the YxxL element. Residues Tyr633–Ala653 traverse the membrane as a helical segment. Topologically, residues Glu654–Asn1109 are lumenal. Intrachain disulfides connect Cys740–Cys775, Cys744–Cys782, Cys756–Cys889, Cys770–Cys900, Cys785–Cys908, Cys811–Cys820, Cys828–Cys837, and Cys868–Cys872. The interval Phe762–Cys782 is fusion loop. N-linked (GlcNAc...) asparagine; by host glycosylation occurs at Asn932. Intrachain disulfides connect Cys974-Cys1004, Cys997-Cys1049, Cys1014-Cys1019, Cys1050-Cys1055, and Cys1089-Cys1093. Residues Trp1110 to Cys1130 form a helical membrane-spanning segment. A binding to the ribonucleoprotein region spans residues Leu1126–Lys1141. Over Cys1131 to Lys1141 the chain is Cytoplasmic.

The protein belongs to the hantavirus envelope glycoprotein family. As to quaternary structure, homodimer. Homotetramer; forms heterotetrameric Gn-Gc spikes in the pre-fusion conformation. Interacts (via C-terminus) with the nucleoprotein. Interacts with host TUFM; this interaction contributes to the virus-induced degradation of mitochondria by autophagy, which leads to degradation of host MAVS and inhibition of type I interferon (IFN) responses. Interacts with host MAP1LC3B; this interaction contributes to the virus-induced degradation of mitochondria by autophagy, which leads to degradation of host MAVS and inhibition of type I interferon (IFN) responses. Homodimer. Homotetramer; forms heterotetrameric Gn-Gc spikes in the pre-fusion conformation. Homotrimer; forms homotrimer in the post-fusion conformation at acidic pH. Interacts (via C-terminus) with the nucleoprotein. Envelope polyprotein precursor is quickly cleaved in vivo just after synthesis, presumably by host signal peptidase.

Its subcellular location is the virion membrane. The protein resides in the host cell surface. It is found in the host Golgi apparatus membrane. It localises to the host endoplasmic reticulum membrane. The protein localises to the host mitochondrion. Functionally, forms homotetramers with glycoprotein C at the surface of the virion. Attaches the virion to host cell receptors including integrin alpha5/ITGB1. This attachment induces virion internalization predominantly through clathrin-dependent endocytosis. Mediates the assembly and budding of infectious virus particles through its interaction with the nucleocapsid protein and the viral genome. May dysregulate normal immune and endothelial cell responses through an ITAM motif. Translocates to mitochondria, binds to host TUFM and recruits MAP1LC3B. These interactions induce mitochondrial autophagy and therefore destruction of host MAVS leading to inhibition of type I interferon (IFN) responses. Concomitant breakdown of glycoprotein N is apparently prevented by the nucleoprotein that may inhibit Gn-stimulated autophagosome-lysosome fusion. Interacts with the viral genomic RNA. Inhibits the host RIG-I/TBK1 pathway by disrupting the formation of TBK1-TRAF3 complexes and downstream signaling responses required for IFN-beta transcription. In terms of biological role, forms homotetramers with glycoprotein N at the surface of the virion. Attaches the virion to host cell receptors including integrin ITGAV/ITGB3. This attachment induces virion internalization predominantly through clathrin-dependent endocytosis. Class II fusion protein that promotes fusion of viral membrane with host endosomal membrane after endocytosis of the virion. This chain is Envelopment polyprotein (GP), found in Tula orthohantavirus (TULV).